The primary structure comprises 36 residues: Photosystem II reaction center protein M (36 aa).

A helical membrane pass occupies residues 7-27 (GFVASLMFVLVPTVFLIVLFI).

This sequence belongs to the PsbM family. As to quaternary structure, PSII is composed of 1 copy each of membrane proteins PsbA, PsbB, PsbC, PsbD, PsbE, PsbF, PsbH, PsbI, PsbJ, PsbK, PsbL, PsbM, PsbT, PsbX, PsbY, PsbZ, Psb30/Ycf12, peripheral proteins PsbO, CyanoQ (PsbQ), PsbU, PsbV and a large number of cofactors. It forms dimeric complexes.

The protein localises to the cellular thylakoid membrane. Its function is as follows. One of the components of the core complex of photosystem II (PSII). PSII is a light-driven water:plastoquinone oxidoreductase that uses light energy to abstract electrons from H(2)O, generating O(2) and a proton gradient subsequently used for ATP formation. It consists of a core antenna complex that captures photons, and an electron transfer chain that converts photonic excitation into a charge separation. This subunit is found at the monomer-monomer interface. The sequence is that of Photosystem II reaction center protein M from Synechococcus sp. (strain CC9311).